The following is a 1035-amino-acid chain: Cell-division control histidine kinase PdhS (1035 aa).

Positions 1–613 (MSGSYPFIDI…HADGSEEPVD (613 aa)) are important for polar localization. Positions 500–533 (QGLANTRAESETPVSETSSIEPVEPTPPVKTRSE) are disordered. The segment at 614-1035 (AHLNAIAWRG…VFPPTRVLAD (422 aa)) is interaction with DivK. The PAS domain occupies 659–730 (HVEELKTILD…YLHGLSGNGV (72 aa)). In terms of domain architecture, Histidine kinase spans 802–1031 (RISHEIRTPL…VVEIVFPPTR (230 aa)). A Phosphohistidine; by autocatalysis modification is found at His805.

Interacts with DivK.

It localises to the cytoplasm. The enzyme catalyses ATP + protein L-histidine = ADP + protein N-phospho-L-histidine.. Its function is as follows. Functions as a polar differentiation marker. Essential protein that, by localizing in the old pole of dividing cells, controls cell division and maturation, probably through control of DivK phosphorylation status and cellular distribution, which in turn regulates CtrA, a transcriptional regulator of the minB operon. The asymmetrical localization of this protein is probably required for cells to enter a new division cycle. In Brucella suis biovar 1 (strain 1330), this protein is Cell-division control histidine kinase PdhS (pdhS).